Consider the following 310-residue polypeptide: HPr kinase/phosphorylase (310 aa).

Catalysis depends on residues histidine 138 and lysine 159. 153–160 serves as a coordination point for ATP; that stretch reads GKSGVGKS. Residue serine 160 participates in Mg(2+) binding. The active-site Proton acceptor; for phosphorylation activity. Proton donor; for dephosphorylation activity is aspartate 177. Residues 201 to 210 form an important for the catalytic mechanism of both phosphorylation and dephosphorylation region; sequence LEIRGLGIIN. Residue glutamate 202 coordinates Mg(2+). Arginine 243 is a catalytic residue. An important for the catalytic mechanism of dephosphorylation region spans residues 264–269; it reads PVRPGR.

Belongs to the HPrK/P family. In terms of assembly, homohexamer. Mg(2+) is required as a cofactor.

It carries out the reaction [HPr protein]-L-serine + ATP = [HPr protein]-O-phospho-L-serine + ADP + H(+). The catalysed reaction is [HPr protein]-O-phospho-L-serine + phosphate + H(+) = [HPr protein]-L-serine + diphosphate. In terms of biological role, catalyzes the ATP- as well as the pyrophosphate-dependent phosphorylation of a specific serine residue in HPr, a phosphocarrier protein of the phosphoenolpyruvate-dependent sugar phosphotransferase system (PTS). HprK/P also catalyzes the pyrophosphate-producing, inorganic phosphate-dependent dephosphorylation (phosphorolysis) of seryl-phosphorylated HPr (P-Ser-HPr). The two antagonistic activities of HprK/P are regulated by several intracellular metabolites, which change their concentration in response to the absence or presence of rapidly metabolisable carbon sources (glucose, fructose, etc.) in the growth medium. Also phosphorylates/dephosphorylates the HPr-like catabolite repression protein crh on a specific serine residue. Therefore, by controlling the phosphorylation state of HPr and crh, HPrK/P is a sensor enzyme that plays a major role in the regulation of carbon metabolism and sugar transport: it mediates carbon catabolite repression (CCR), and regulates PTS-catalyzed carbohydrate uptake and inducer exclusion. This chain is HPr kinase/phosphorylase, found in Bacillus licheniformis (strain ATCC 14580 / DSM 13 / JCM 2505 / CCUG 7422 / NBRC 12200 / NCIMB 9375 / NCTC 10341 / NRRL NRS-1264 / Gibson 46).